The sequence spans 546 residues: (-)-5-epieremophilene synthase STPS2 (546 aa).

Residues D299, D303, D442, T446, and E450 each contribute to the Mg(2+) site. The DDXXD motif motif lies at 299 to 303 (DDTYD).

This sequence belongs to the terpene synthase family. Tpsa subfamily. Monomer. Mg(2+) is required as a cofactor. As to expression, highly expressed in leaves. Expressed at levels in flowers.

The catalysed reaction is (2E,6E)-farnesyl diphosphate = (-)-5-epi-eremophilene + diphosphate. It participates in secondary metabolite biosynthesis; terpenoid biosynthesis. Sesquiterpene synthase that catalyzes the conversion of farnesyl diphosphate to (-)-5-epi-eremophilene. The protein is (-)-5-epieremophilene synthase STPS2 of Salvia miltiorrhiza (Chinese sage).